Consider the following 155-residue polypeptide: MANVESFDLDHTKVQAPYVRLAGVKTTPRGDQISKYDLRLLQPNRGAIEPAALHTLEHLLAGYLRDHLQNVVDVSPMGCRTGLYLAVIGEPDEEGVLQAFEAALRDTATHDRPIPGVSELECGNYRDHDLQAARQYARDALTQGLKVQKTILLQR.

Residues H54, H58, and C122 each coordinate Fe cation.

It belongs to the LuxS family. In terms of assembly, homodimer. The cofactor is Fe cation.

It carries out the reaction S-(5-deoxy-D-ribos-5-yl)-L-homocysteine = (S)-4,5-dihydroxypentane-2,3-dione + L-homocysteine. In terms of biological role, involved in the synthesis of autoinducer 2 (AI-2) which is secreted by bacteria and is used to communicate both the cell density and the metabolic potential of the environment. The regulation of gene expression in response to changes in cell density is called quorum sensing. Catalyzes the transformation of S-ribosylhomocysteine (RHC) to homocysteine (HC) and 4,5-dihydroxy-2,3-pentadione (DPD). This chain is S-ribosylhomocysteine lyase, found in Deinococcus geothermalis (strain DSM 11300 / CIP 105573 / AG-3a).